We begin with the raw amino-acid sequence, 630 residues long: Polyphenol oxidase A, chloroplastic (630 aa).

The interval 1–25 (MASLCSNSSSTSLKTPFTSSTTCLS) is disordered. A chloroplast-targeting transit peptide spans 1–87 (MASLCSNSSS…ANAIPLAASA (87 aa)). 2 cysteine pairs are disulfide-bonded: C98–C114 and C113–C181. 6 residues coordinate Cu cation: H180, H198, H207, H328, H332, and H370. The 2'-(S-cysteinyl)-histidine (Cys-His) cross-link spans 184–198 (CNGGYSIDGKVLQVH).

This sequence belongs to the tyrosinase family. It depends on Cu(2+) as a cofactor.

Its subcellular location is the plastid. It is found in the chloroplast thylakoid lumen. The catalysed reaction is 2 catechol + O2 = 2 1,2-benzoquinone + 2 H2O. Functionally, catalyzes the oxidation of mono- and o-diphenols to o-diquinones. The sequence is that of Polyphenol oxidase A, chloroplastic from Solanum lycopersicum (Tomato).